The following is an 852-amino-acid chain: DNA double-strand break repair Rad50 ATPase (852 aa).

Residues asparagine 32, glycine 33, alanine 34, glycine 35, lysine 36, serine 37, serine 38, arginine 53, tyrosine 54, aspartate 59, valine 61, and arginine 63 each contribute to the ATP site. Serine 37 lines the Mg(2+) pocket. Glutamine 142 contacts Mg(2+). 2 coiled-coil regions span residues 155–345 (EITE…EELD) and 389–427 (LLSI…QIAS). Positions 389–488 (LLSIEKTENE…SLSSLIEDLL (100 aa)) constitute a Zinc-hook domain. Zn(2+) contacts are provided by cysteine 435 and cysteine 438. 2 coiled-coil regions span residues 460-488 (DQKR…EDLL) and 534-711 (KIEE…LFDK). Mg(2+) is bound at residue aspartate 797.

This sequence belongs to the SMC family. RAD50 subfamily. In terms of assembly, homodimer. Forms a complex with Mre11. Requires Zn(2+) as cofactor.

It carries out the reaction ATP + H2O = ADP + phosphate + H(+). In terms of biological role, involved in DNA double-strand break repair (DSBR). The Rad50/Mre11 complex possesses single-strand endonuclease activity and ATP-dependent double-strand-specific 3'-5' exonuclease activity. Rad50 provides an ATP-dependent control of Mre11 by positioning DNA ends into the Mre11 active site: ATP-binding induces a large structural change from an open form with accessible Mre11 nuclease sites into a closed form. The protein is DNA double-strand break repair Rad50 ATPase of Thermotoga maritima (strain ATCC 43589 / DSM 3109 / JCM 10099 / NBRC 100826 / MSB8).